Consider the following 163-residue polypeptide: SsrA-binding protein (163 aa).

This sequence belongs to the SmpB family.

It is found in the cytoplasm. Functionally, required for rescue of stalled ribosomes mediated by trans-translation. Binds to transfer-messenger RNA (tmRNA), required for stable association of tmRNA with ribosomes. tmRNA and SmpB together mimic tRNA shape, replacing the anticodon stem-loop with SmpB. tmRNA is encoded by the ssrA gene; the 2 termini fold to resemble tRNA(Ala) and it encodes a 'tag peptide', a short internal open reading frame. During trans-translation Ala-aminoacylated tmRNA acts like a tRNA, entering the A-site of stalled ribosomes, displacing the stalled mRNA. The ribosome then switches to translate the ORF on the tmRNA; the nascent peptide is terminated with the 'tag peptide' encoded by the tmRNA and targeted for degradation. The ribosome is freed to recommence translation, which seems to be the essential function of trans-translation. This chain is SsrA-binding protein, found in Shewanella sp. (strain ANA-3).